The primary structure comprises 98 residues: Small ribosomal subunit protein uS17 (98 aa).

It belongs to the universal ribosomal protein uS17 family. Part of the 30S ribosomal subunit.

One of the primary rRNA binding proteins, it binds specifically to the 5'-end of 16S ribosomal RNA. The protein is Small ribosomal subunit protein uS17 of Leptothrix cholodnii (strain ATCC 51168 / LMG 8142 / SP-6) (Leptothrix discophora (strain SP-6)).